Reading from the N-terminus, the 164-residue chain is uncharacterized protein (164 aa).

This is an uncharacterized protein from Acanthamoeba polyphaga mimivirus (APMV).